Consider the following 254-residue polypeptide: Keratin-associated protein 24-1 (254 aa).

6 repeat units span residues 193 to 202, 203 to 212, 213 to 222, 223 to 232, 233 to 242, and 243 to 252. The segment at 193-252 is 6 X 10 AA repeats of Y-[ILR]-[SVPC]-[NRTS]-[SNTG]-X-[QHRP]-[PSY]-[QSL]-[SRK]; it reads YISNSCQPQSYLVRNYHYSSYRPTSCRPLSYLSRSFRSLSYIPSTFPPLRYLCSGSRPLK.

This sequence belongs to the PMG family. In terms of assembly, interacts with hair keratins. Specific expression in the middle/upper hair cuticle.

Functionally, in the hair cortex, hair keratin intermediate filaments are embedded in an interfilamentous matrix, consisting of hair keratin-associated proteins (KRTAP), which are essential for the formation of a rigid and resistant hair shaft through their extensive disulfide bond cross-linking with abundant cysteine residues of hair keratins. The matrix proteins include the high-sulfur and high-glycine-tyrosine keratins. In Homo sapiens (Human), this protein is Keratin-associated protein 24-1 (KRTAP24-1).